A 316-amino-acid chain; its full sequence is MLSEQTAASGSSSSSRGADDREIVISTGREIVVRSSGGEEREEEVVVEEELEEPEFRDIHALSPPPTPTPSQPSSSYHRRRRESWESAAGSRHTSIRSVGSDTAPSELFPTMSREFSAMVAAAANANAAAAAAANGGDSSRAGVDDALGRIGEDELEETNPLAIVPDSNPIPSPRRAHLALPAPGDVSSAGGGHGDEVSVGQVKKEEVESKIAAWQIAEVAKVNNRFKREEVVINGWEGDQVEKANAWLKKYERKLEEKRAKAMEKAQNEVAKARRKAEEKRASAEAKRGTKVARVLELANFMRAVGRAPSKRSFF.

Disordered regions lie at residues 1–108 (MLSE…PSEL), 125–202 (NANA…SVGQ), and 267–287 (AQNE…SAEA). Acidic residues predominate over residues 40 to 53 (EREEEVVVEEELEE). Residues 92–104 (RHTSIRSVGSDTA) are compositionally biased toward polar residues. The span at 125-135 (NANAAAAAAAN) shows a compositional bias: low complexity. 2 stretches are compositionally biased toward basic and acidic residues: residues 143–153 (GVDDALGRIGE) and 277–287 (KAEEKRASAEA). The stretch at 242 to 288 (VEKANAWLKKYERKLEEKRAKAMEKAQNEVAKARRKAEEKRASAEAK) forms a coiled coil.

The protein belongs to the remorin family. Interacts with BAK1. Post-translationally, phosphorylated by BRI1. Phosphorylation reduces the binding affinity to BAK1. In terms of tissue distribution, expressed in roots, leaf blades and leaf sheaths. Expressed at low levels in stems and spikelets.

The protein resides in the cell membrane. In terms of biological role, functions in abscisic acid (ABA) signaling downstream of BZIP23. Acts as antagonistic and negative regulator of brassinosteroid (BR) signaling. Binds to BAK1 and inhibits its interaction with the BR receptor BRI1. Inhibits the formation and subsequent activation of the BRI1-BAK1 receptor complex. The sequence is that of Remorin 4.1 from Oryza sativa subsp. japonica (Rice).